We begin with the raw amino-acid sequence, 493 residues long: Putative glycerol-3-phosphate transporter 5 (493 aa).

12 helical membrane-spanning segments follow: residues 25 to 44 (FTFH…ASFH), 83 to 103 (LGEL…FAGH), 113 to 133 (FLVF…LGYW), 145 to 165 (VQIV…SVVG), 185 to 205 (SVGN…GWGW), 207 to 227 (FVLP…FLVV), 292 to 312 (FCLF…PYYL), 328 to 348 (GILS…AGFI), 352 to 372 (IKAR…ALIM), 375 to 395 (VYGS…GLLV), 428 to 448 (AIID…AGYI), and 452 to 472 (GWNS…LFLV).

The protein belongs to the major facilitator superfamily. Organophosphate:Pi antiporter (OPA) (TC 2.A.1.4) family.

The protein localises to the membrane. The chain is Putative glycerol-3-phosphate transporter 5 from Arabidopsis thaliana (Mouse-ear cress).